The primary structure comprises 237 residues: Lipoprotein-releasing system ATP-binding protein LolD (237 aa).

Residues 16 to 237 (LKCEGLTRIY…LDQGRLSEDA (222 aa)) form the ABC transporter domain. 52 to 59 (GSSGSGKT) contacts ATP.

Belongs to the ABC transporter superfamily. Lipoprotein translocase (TC 3.A.1.125) family. As to quaternary structure, the complex is composed of two ATP-binding proteins (LolD) and two transmembrane proteins (LolC and LolE).

It localises to the cell inner membrane. Part of the ABC transporter complex LolCDE involved in the translocation of mature outer membrane-directed lipoproteins, from the inner membrane to the periplasmic chaperone, LolA. Responsible for the formation of the LolA-lipoprotein complex in an ATP-dependent manner. The chain is Lipoprotein-releasing system ATP-binding protein LolD from Chromohalobacter salexigens (strain ATCC BAA-138 / DSM 3043 / CIP 106854 / NCIMB 13768 / 1H11).